A 55-amino-acid chain; its full sequence is ATP synthase F(0) complex subunit 8 (55 aa).

The helical transmembrane segment at 9–29 (WFAIMVFSWFVFLIFLPPKIM) threads the bilayer.

It belongs to the ATPase protein 8 family. Component of the ATP synthase complex composed at least of ATP5F1A/subunit alpha, ATP5F1B/subunit beta, ATP5MC1/subunit c (homooctomer), MT-ATP6/subunit a, MT-ATP8/subunit 8, ATP5ME/subunit e, ATP5MF/subunit f, ATP5MG/subunit g, ATP5MK/subunit k, ATP5MJ/subunit j, ATP5F1C/subunit gamma, ATP5F1D/subunit delta, ATP5F1E/subunit epsilon, ATP5PF/subunit F6, ATP5PB/subunit b, ATP5PD/subunit d, ATP5PO/subunit OSCP. ATP synthase complex consists of a soluble F(1) head domain (subunits alpha(3) and beta(3)) - the catalytic core - and a membrane F(0) domain - the membrane proton channel (subunits c, a, 8, e, f, g, k and j). These two domains are linked by a central stalk (subunits gamma, delta, and epsilon) rotating inside the F1 region and a stationary peripheral stalk (subunits F6, b, d, and OSCP).

The protein resides in the mitochondrion membrane. Subunit 8, of the mitochondrial membrane ATP synthase complex (F(1)F(0) ATP synthase or Complex V) that produces ATP from ADP in the presence of a proton gradient across the membrane which is generated by electron transport complexes of the respiratory chain. ATP synthase complex consist of a soluble F(1) head domain - the catalytic core - and a membrane F(1) domain - the membrane proton channel. These two domains are linked by a central stalk rotating inside the F(1) region and a stationary peripheral stalk. During catalysis, ATP synthesis in the catalytic domain of F(1) is coupled via a rotary mechanism of the central stalk subunits to proton translocation. In vivo, can only synthesize ATP although its ATP hydrolase activity can be activated artificially in vitro. Part of the complex F(0) domain. The protein is ATP synthase F(0) complex subunit 8 of Tetraodon nigroviridis (Spotted green pufferfish).